The chain runs to 552 residues: Putative transport protein HSM_0534 (552 aa).

5 helical membrane-spanning segments follow: residues 4-24 (IAITICILALVAVIGLWIGHW), 28-48 (GVGLGIGGVLFGGIIVAHFMN), 67-87 (LILFVYTIGIQVGPGFFASLL), 95-115 (GLATLIVVLGAVSVFVLYKVV), and 157-177 (MAYAMAYPFGICGILLSMWLI). RCK C-terminal domains are found at residues 190–275 (KQFQ…VIGE) and 277–360 (IDMP…IIGN). Helical transmembrane passes span 370 to 390 (MLPVFIGIGLGVLLGSIPFYI), 402 to 424 (AGGPLVVALILARIGSVGKLYWF), 438 to 458 (IVLFLAVVGLKSGGGFVDTLV), 463 to 483 (LEWMGYGMFITFIPLMITGII), 495 to 515 (LCGLLAGSMTDPPALAFANAI), and 529 to 549 (VYPLSMFLRIMSPQLLAILLW).

Belongs to the AAE transporter (TC 2.A.81) family. YidE subfamily.

The protein localises to the cell membrane. This is Putative transport protein HSM_0534 from Histophilus somni (strain 2336) (Haemophilus somnus).